A 1486-amino-acid chain; its full sequence is Alsin homolog (1486 aa).

3 RCC1 repeats span residues 147–201 (QGVV…MLVA), 256–307 (HTQL…ARTL), and 308–363 (DGRL…LLNA). 6 MORN repeats span residues 744-765 (CGTW…DGSV), 766-784 (YCGE…MVIP), 789-804 (YVGN…HGVY), 817-832 (YEGN…HGVM), 839-853 (YVGE…GYGV), and 863-884 (YMGM…NRGD). Residues 1333–1486 (SRKDEMYRQN…VTSRALQKIP (154 aa)) form the VPS9 domain.

In the embryo, expressed in a wide range of tissues including the epidermis and the ventral nerve cord.

Functionally, has guanine nucleotide exchange factor (GEF) activity towards Rab5. Promotes the exchange of GDP to GTP, converting inactive GDP-bound Rab5 into its active GTP-bound form. The protein is Alsin homolog of Drosophila melanogaster (Fruit fly).